Consider the following 1020-residue polypeptide: Sodium/potassium-transporting ATPase subunit alpha-2 (1020 aa).

Positions 1–5 are excised as a propeptide; the sequence is MGRGA. The tract at residues 1-31 is disordered; that stretch reads MGRGAGREYSPAATTAENGGGKKKQKEKELD. Residues 6-85 lie on the Cytoplasmic side of the membrane; sequence GREYSPAATT…NALTPPPTTP (80 aa). Serine 10 carries the post-translational modification Phosphoserine. Residues 80-82 are interaction with phosphoinositide-3 kinase; the sequence is PPP. A helical transmembrane segment spans residues 86–106; it reads EWVKFCRQLFGGFSILLWIGA. The Extracellular portion of the chain corresponds to 107 to 129; it reads ILCFLAYGIQAAMEDEPSNDNLY. A helical transmembrane segment spans residues 130–150; sequence LGVVLAAVVIVTGCFSYYQEA. Over 151–286 the chain is Cytoplasmic; that stretch reads KSSKIMDSFK…VGRTPIAMEI (136 aa). A compositionally biased stretch (polar residues) spans 212–227; sequence DNSSLTGESEPQTRSP. The disordered stretch occupies residues 212–231; the sequence is DNSSLTGESEPQTRSPEFTH. Residues 287-306 form a helical membrane-spanning segment; sequence EHFIQLITGVAVFPGVSFFV. The Extracellular portion of the chain corresponds to 307-318; the sequence is LSLILGYSWLEA. Residues 319–336 traverse the membrane as a helical segment; that stretch reads VIFLIGIIVANVPEGLLA. Residues 337-769 lie on the Cytoplasmic side of the membrane; the sequence is TVTVCLTLTA…EEGRLVFDNL (433 aa). The active-site 4-aspartylphosphate intermediate is aspartate 374. Residues serine 439, serine 450, serine 496, and serine 559 each carry the phosphoserine modification. Threonine 570 is modified (phosphothreonine). 2 positions are modified to phosphoserine: serine 587 and serine 672. Aspartate 714 and aspartate 718 together coordinate Mg(2+). Residues 770-789 form a helical membrane-spanning segment; sequence KKSIAYTLTSNIPEITPFLL. Topologically, residues 790–799 are extracellular; it reads FIIANIPLPL. Residues 800–820 traverse the membrane as a helical segment; it reads GTVTILCIDLGTDMVPAISLA. At 821–840 the chain is on the cytoplasmic side; sequence YEAAESDIMKRQPRNSQTDK. Position 826 is a phosphoserine (serine 826). A helical membrane pass occupies residues 841–863; it reads LVNERLISMAYGQIGMIQALGGF. Over 864–915 the chain is Extracellular; it reads FTYFVILAENGFLPSRLLGIRLDWDDRTMNDLEDSYGQEWTYEQRKVVEFTC. A helical transmembrane segment spans residues 916–935; sequence HTAFFASIVVVQWADLIICK. Residues 936 to 948 lie on the Cytoplasmic side of the membrane; it reads TRRNSVFQQGMKN. The residue at position 940 (serine 940) is a Phosphoserine; by PKA. The helical transmembrane segment at 949-967 threads the bilayer; that stretch reads KILIFGLLEETALAAFLSY. The Extracellular portion of the chain corresponds to 968–982; sequence CPGMGVALRMYPLKV. A helical membrane pass occupies residues 983–1003; it reads TWWFCAFPYSLLIFIYDEVRK. The Cytoplasmic segment spans residues 1004–1020; sequence LILRRYPGGWVEKETYY.

Belongs to the cation transport ATPase (P-type) (TC 3.A.3) family. Type IIC subfamily. In terms of assembly, the sodium/potassium-transporting ATPase is composed of a catalytic alpha subunit, an auxiliary non-catalytic beta subunit and an additional regulatory subunit. Interacts with regulatory subunit FXYD1.

The protein localises to the membrane. It is found in the cell membrane. It carries out the reaction K(+)(out) + Na(+)(in) + ATP + H2O = K(+)(in) + Na(+)(out) + ADP + phosphate + H(+). In terms of biological role, this is the catalytic component of the active enzyme, which catalyzes the hydrolysis of ATP coupled with the exchange of sodium and potassium ions across the plasma membrane. This action creates the electrochemical gradient of sodium and potassium, providing the energy for active transport of various nutrients. This chain is Sodium/potassium-transporting ATPase subunit alpha-2 (ATP1A2), found in Pongo abelii (Sumatran orangutan).